The chain runs to 872 residues: Alanine--tRNA ligase (872 aa).

Zn(2+)-binding residues include H567, H571, C669, and H673.

The protein belongs to the class-II aminoacyl-tRNA synthetase family. Requires Zn(2+) as cofactor.

The protein localises to the cytoplasm. The catalysed reaction is tRNA(Ala) + L-alanine + ATP = L-alanyl-tRNA(Ala) + AMP + diphosphate. Functionally, catalyzes the attachment of alanine to tRNA(Ala) in a two-step reaction: alanine is first activated by ATP to form Ala-AMP and then transferred to the acceptor end of tRNA(Ala). Also edits incorrectly charged Ser-tRNA(Ala) and Gly-tRNA(Ala) via its editing domain. This Streptococcus pyogenes serotype M12 (strain MGAS2096) protein is Alanine--tRNA ligase.